Reading from the N-terminus, the 299-residue chain is 33 kDa chaperonin (299 aa).

2 cysteine pairs are disulfide-bonded: C234–C236 and C268–C271.

This sequence belongs to the HSP33 family. Post-translationally, under oxidizing conditions two disulfide bonds are formed involving the reactive cysteines. Under reducing conditions zinc is bound to the reactive cysteines and the protein is inactive.

It is found in the cytoplasm. In terms of biological role, redox regulated molecular chaperone. Protects both thermally unfolding and oxidatively damaged proteins from irreversible aggregation. Plays an important role in the bacterial defense system toward oxidative stress. The chain is 33 kDa chaperonin from Pseudomonas putida (strain ATCC 47054 / DSM 6125 / CFBP 8728 / NCIMB 11950 / KT2440).